A 153-amino-acid chain; its full sequence is Prefoldin subunit alpha (153 aa).

The protein belongs to the prefoldin subunit alpha family. As to quaternary structure, heterohexamer of two alpha and four beta subunits.

Its subcellular location is the cytoplasm. Functionally, molecular chaperone capable of stabilizing a range of proteins. Seems to fulfill an ATP-independent, HSP70-like function in archaeal de novo protein folding. This chain is Prefoldin subunit alpha, found in Methanothrix thermoacetophila (strain DSM 6194 / JCM 14653 / NBRC 101360 / PT) (Methanosaeta thermophila).